The sequence spans 481 residues: Pentatricopeptide repeat-containing protein At2g48000 (481 aa).

PPR repeat units lie at residues Thr-147–Pro-181, Ser-187–Pro-221, Asp-222–Pro-256, Thr-257–His-287, Glu-292–Lys-324, Lys-328–Ile-362, Thr-364–Met-398, Ser-399–Arg-433, and Ser-434–Phe-469.

This sequence belongs to the PPR family. P subfamily.

The protein is Pentatricopeptide repeat-containing protein At2g48000 of Arabidopsis thaliana (Mouse-ear cress).